We begin with the raw amino-acid sequence, 364 residues long: B3 domain-containing protein At5g38490 (364 aa).

Positions 148–202 (ASTSSSSLLNLPCLEPSTETKDVPNPNYQSSSPSSCLTGKTNRKRRAVEQRKSGK) are disordered. Residues 260-364 (FQKLIRNDFL…GVLCFALDTE (105 aa)) constitute a DNA-binding region (TF-B3).

Its subcellular location is the nucleus. The protein is B3 domain-containing protein At5g38490 of Arabidopsis thaliana (Mouse-ear cress).